The sequence spans 151 residues: UPF0178 protein Tcr_1995 (151 aa).

Residues 116–135 (RSSGVDTGGPPPLNQKDRQA) form a disordered region.

It belongs to the UPF0178 family.

This Hydrogenovibrio crunogenus (strain DSM 25203 / XCL-2) (Thiomicrospira crunogena) protein is UPF0178 protein Tcr_1995.